Reading from the N-terminus, the 304-residue chain is MNLSVKLPGLNLKNPIMPASGCFGFGKEYSEYYDLSLLGGVMMKAATQFERLGNPTPRVAETSAGMLNAIGLQNPGVQQIIDHEVPRLAKYDTSIIANIAGSSIEEYEFVAASFNQTTDVDALELNISCPNVKEGGIQFGTDPFMAKKVTEVVKKASNKPVYVKLSPNVHNIVEMAKAVEEAGADGLSMINTLTGMKIHLPSRKPLIANKTGGLSGPAIKPVAIRMIYEVRQQVSIPIIGMGGITSAEDVLEYLIAGADAVAVGTANFQNPFVCVDIINELPEVLEQYGFNSIEDVIEKRGITV.

FMN is bound by residues S20 and 44–45; that span reads KA. Substrate contacts are provided by residues K44 and 68–72; that span reads NAIGL. 2 residues coordinate FMN: N98 and N126. Residue N126 coordinates substrate. The Nucleophile role is filled by C129. Residues K164 and I190 each coordinate FMN. 191-192 lines the substrate pocket; that stretch reads NT. Residues G216, 242–243, and 264–265 each bind FMN; these read GG and GT.

The protein belongs to the dihydroorotate dehydrogenase family. Type 1 subfamily. Heterotetramer of 2 PyrK and 2 PyrD type B subunits. FMN serves as cofactor.

It is found in the cytoplasm. It catalyses the reaction (S)-dihydroorotate + NAD(+) = orotate + NADH + H(+). It functions in the pathway pyrimidine metabolism; UMP biosynthesis via de novo pathway; orotate from (S)-dihydroorotate (NAD(+) route): step 1/1. In terms of biological role, catalyzes the conversion of dihydroorotate to orotate with NAD(+) as electron acceptor. The sequence is that of Dihydroorotate dehydrogenase B (NAD(+)), catalytic subunit (pyrD) from Oceanobacillus iheyensis (strain DSM 14371 / CIP 107618 / JCM 11309 / KCTC 3954 / HTE831).